Consider the following 151-residue polypeptide: UPF0178 protein Shal_3046 (151 aa).

It belongs to the UPF0178 family.

This is UPF0178 protein Shal_3046 from Shewanella halifaxensis (strain HAW-EB4).